A 202-amino-acid polypeptide reads, in one-letter code: Cytochrome c oxidase assembly protein CtaG (202 aa).

Topologically, residues 1–14 are cytoplasmic; sequence MSENAGTPKKQGRN. Residues 15 to 37 traverse the membrane as a helical; Signal-anchor for type II membrane protein segment; that stretch reads NGAVVMMCLSFVFGMGAMSYAAV. Residues 38-202 lie on the Periplasmic side of the membrane; that stretch reads PLYRIFCQVT…GGAEKIEKKL (165 aa).

Belongs to the COX11/CtaG family.

Its subcellular location is the cell inner membrane. Its function is as follows. Exerts its effect at some terminal stage of cytochrome c oxidase synthesis, probably by being involved in the insertion of the copper B into subunit I. In Rhizobium johnstonii (strain DSM 114642 / LMG 32736 / 3841) (Rhizobium leguminosarum bv. viciae), this protein is Cytochrome c oxidase assembly protein CtaG.